Consider the following 382-residue polypeptide: Na(+)/H(+) antiporter NhaA 2 (382 aa).

12 helical membrane-spanning segments follow: residues 7 to 27 (AGGVLLIAASILALIFANSYL), 28 to 48 (SGFYNGVLNLPLVVAIGAFEI), 52 to 72 (LLLWVNDGLMALFFLMVGLEV), 88 to 108 (VLPGLAALAGVAFPAIIYASF), 118 to 138 (GWAIPSATDIAFALGVFSLFG), 147 to 167 (LFLLSVAIFDDIAAIVIIALF), 170 to 190 (HELSTLSLLVAGIGIVMLFVL), 206 to 226 (LVVWAAVLKSGVHATLAGFVI), 254 to 274 (VAYFILPFFAFVNAGVHLGGI), 285 to 305 (LGIIVGLFVGKQLGIFSVCWL), 325 to 345 (GVCLLAGIGFTMSLFIGSLAF), and 356 to 376 (VKLGVLFGSLLSAICGALILT).

This sequence belongs to the NhaA Na(+)/H(+) (TC 2.A.33) antiporter family.

Its subcellular location is the cell inner membrane. It carries out the reaction Na(+)(in) + 2 H(+)(out) = Na(+)(out) + 2 H(+)(in). Its function is as follows. Na(+)/H(+) antiporter that extrudes sodium in exchange for external protons. The sequence is that of Na(+)/H(+) antiporter NhaA 2 from Saccharophagus degradans (strain 2-40 / ATCC 43961 / DSM 17024).